The sequence spans 452 residues: Translation initiation factor eIF2B subunit gamma (452 aa).

Methionine 1 bears the N-acetylmethionine mark. Phosphoserine is present on serine 260.

Belongs to the eIF-2B gamma/epsilon subunits family. Component of the translation initiation factor 2B (eIF2B) complex which is a heterodecamer of two sets of five different subunits: alpha, beta, gamma, delta and epsilon. Subunits alpha, beta and delta comprise a regulatory subcomplex and subunits epsilon and gamma comprise a catalytic subcomplex. Within the complex, the hexameric regulatory complex resides at the center, with the two heterodimeric catalytic subcomplexes bound on opposite sides.

It localises to the cytoplasm. It is found in the cytosol. Activated by the chemical integrated stress response (ISR) inhibitor ISRIB which stimulates guanine nucleotide exchange factor activity for both phosphorylated and unphosphorylated eIF2. In terms of biological role, acts as a component of the translation initiation factor 2B (eIF2B) complex, which catalyzes the exchange of GDP for GTP on the eukaryotic initiation factor 2 (eIF2) complex gamma subunit. Its guanine nucleotide exchange factor activity is repressed when bound to eIF2 complex phosphorylated on the alpha subunit, thereby limiting the amount of methionyl-initiator methionine tRNA available to the ribosome and consequently global translation is repressed. In Macaca fascicularis (Crab-eating macaque), this protein is Translation initiation factor eIF2B subunit gamma (EIF2B3).